The chain runs to 216 residues: tRNA (guanine-N(7)-)-methyltransferase (216 aa).

4 residues coordinate S-adenosyl-L-methionine: E44, E69, N97, and D119. The active site involves D119. Residues K123, D155, and 192–195 (TEYE) contribute to the substrate site.

This sequence belongs to the class I-like SAM-binding methyltransferase superfamily. TrmB family.

The catalysed reaction is guanosine(46) in tRNA + S-adenosyl-L-methionine = N(7)-methylguanosine(46) in tRNA + S-adenosyl-L-homocysteine. It participates in tRNA modification; N(7)-methylguanine-tRNA biosynthesis. Catalyzes the formation of N(7)-methylguanine at position 46 (m7G46) in tRNA. This Lysinibacillus sphaericus (strain C3-41) protein is tRNA (guanine-N(7)-)-methyltransferase.